Reading from the N-terminus, the 576-residue chain is Probable lysosomal cobalamin transporter (576 aa).

10 helical membrane passes run 8-28 (LIWAVYAIVVAVLVMVASVFI), 40-60 (VVTFTCIVAITSLLATVLLLP), 98-118 (YLLYSLDAFLCLLAIPFVYFW), 145-165 (TISFIAIVVVLFIVGFLVPVA), 188-208 (VLTFTLGLLITMGLFLYILYT), 312-332 (LLGGIAILLITLMIWISMLLT), 347-367 (GYILSGIGVFNPINWIFVQSA), 377-397 (LTVVVLLLFGSSVVGISTIGI), 419-439 (LTTAMLMLTILALDYSIPMLV), and 503-523 (FFGTVFFWSQFIFLVIYLLVL). The tract at residues 549–576 (RLLTSSARGVGDTYQSVGGRNNFSTRAG) is disordered. Over residues 561-576 (TYQSVGGRNNFSTRAG) the composition is skewed to polar residues. N-linked (GlcNAc...) asparagine glycosylation is present at N570.

Belongs to the LIMR family. LMBRD1 subfamily.

It is found in the lysosome membrane. Probable lysosomal cobalamin transporter. Required to export cobalamin from lysosomes allowing its conversion to cofactors. The polypeptide is Probable lysosomal cobalamin transporter (Aspergillus niger (strain ATCC MYA-4892 / CBS 513.88 / FGSC A1513)).